We begin with the raw amino-acid sequence, 461 residues long: Argininosuccinate lyase (461 aa).

The protein belongs to the lyase 1 family. Argininosuccinate lyase subfamily.

Its subcellular location is the cytoplasm. It catalyses the reaction 2-(N(omega)-L-arginino)succinate = fumarate + L-arginine. It participates in amino-acid biosynthesis; L-arginine biosynthesis; L-arginine from L-ornithine and carbamoyl phosphate: step 3/3. The chain is Argininosuccinate lyase from Chlorobium luteolum (strain DSM 273 / BCRC 81028 / 2530) (Pelodictyon luteolum).